Here is a 364-residue protein sequence, read N- to C-terminus: UDP-N-acetylglucosamine--N-acetylmuramyl-(pentapeptide) pyrophosphoryl-undecaprenol N-acetylglucosamine transferase (364 aa).

UDP-N-acetyl-alpha-D-glucosamine is bound by residues 15–17, Asn-123, Arg-164, Ser-191, and Gln-286; that span reads TGG.

This sequence belongs to the glycosyltransferase 28 family. MurG subfamily.

The protein localises to the cell inner membrane. It catalyses the reaction di-trans,octa-cis-undecaprenyl diphospho-N-acetyl-alpha-D-muramoyl-L-alanyl-D-glutamyl-meso-2,6-diaminopimeloyl-D-alanyl-D-alanine + UDP-N-acetyl-alpha-D-glucosamine = di-trans,octa-cis-undecaprenyl diphospho-[N-acetyl-alpha-D-glucosaminyl-(1-&gt;4)]-N-acetyl-alpha-D-muramoyl-L-alanyl-D-glutamyl-meso-2,6-diaminopimeloyl-D-alanyl-D-alanine + UDP + H(+). It participates in cell wall biogenesis; peptidoglycan biosynthesis. In terms of biological role, cell wall formation. Catalyzes the transfer of a GlcNAc subunit on undecaprenyl-pyrophosphoryl-MurNAc-pentapeptide (lipid intermediate I) to form undecaprenyl-pyrophosphoryl-MurNAc-(pentapeptide)GlcNAc (lipid intermediate II). This chain is UDP-N-acetylglucosamine--N-acetylmuramyl-(pentapeptide) pyrophosphoryl-undecaprenol N-acetylglucosamine transferase, found in Prochlorococcus marinus subsp. pastoris (strain CCMP1986 / NIES-2087 / MED4).